The sequence spans 137 residues: MANKPTPEELKNGLSEMQFYVTQHHGTEPPFTGRLLHNKKNGVYHCLVCDAPLFNSQTKYDSGCGWPSFYEPVSAEAIRYLTDNSHGMQRIEIRCGNCDAHLGHVFPDGPQPTGERYCVNSASLSFTDEQNGEQIKG.

The MsrB domain occupies 7-129 (PEELKNGLSE…NSASLSFTDE (123 aa)). Zn(2+) contacts are provided by Cys46, Cys49, Cys95, and Cys98. The Nucleophile role is filled by Cys118.

This sequence belongs to the MsrB Met sulfoxide reductase family. Zn(2+) is required as a cofactor.

It catalyses the reaction L-methionyl-[protein] + [thioredoxin]-disulfide + H2O = L-methionyl-(R)-S-oxide-[protein] + [thioredoxin]-dithiol. The sequence is that of Peptide methionine sulfoxide reductase MsrB from Klebsiella pneumoniae subsp. pneumoniae (strain ATCC 700721 / MGH 78578).